A 126-amino-acid polypeptide reads, in one-letter code: Flagellar assembly factor FliW (126 aa).

It belongs to the FliW family. Interacts with translational regulator CsrA and flagellin(s).

It localises to the cytoplasm. Acts as an anti-CsrA protein, binds CsrA and prevents it from repressing translation of its target genes, one of which is flagellin. Binds to flagellin and participates in the assembly of the flagellum. The protein is Flagellar assembly factor FliW of Sulfurimonas denitrificans (strain ATCC 33889 / DSM 1251) (Thiomicrospira denitrificans (strain ATCC 33889 / DSM 1251)).